Here is a 121-residue protein sequence, read N- to C-terminus: NAD(P)H-quinone oxidoreductase subunit M (121 aa).

This sequence belongs to the complex I NdhM subunit family. NDH-1 can be composed of about 15 different subunits; different subcomplexes with different compositions have been identified which probably have different functions.

It is found in the cellular thylakoid membrane. The enzyme catalyses a plastoquinone + NADH + (n+1) H(+)(in) = a plastoquinol + NAD(+) + n H(+)(out). It carries out the reaction a plastoquinone + NADPH + (n+1) H(+)(in) = a plastoquinol + NADP(+) + n H(+)(out). Its function is as follows. NDH-1 shuttles electrons from an unknown electron donor, via FMN and iron-sulfur (Fe-S) centers, to quinones in the respiratory and/or the photosynthetic chain. The immediate electron acceptor for the enzyme in this species is believed to be plastoquinone. Couples the redox reaction to proton translocation, and thus conserves the redox energy in a proton gradient. Cyanobacterial NDH-1 also plays a role in inorganic carbon-concentration. This chain is NAD(P)H-quinone oxidoreductase subunit M, found in Nostoc punctiforme (strain ATCC 29133 / PCC 73102).